Reading from the N-terminus, the 340-residue chain is Proline-rich transmembrane protein 2 (340 aa).

The interval methionine 1 to glycine 261 is disordered. The Cytoplasmic portion of the chain corresponds to methionine 1–tyrosine 268. At serine 28 the chain carries Phosphoserine. Threonine 74 carries the post-translational modification Phosphothreonine. 2 stretches are compositionally biased toward pro residues: residues proline 131–alanine 155 and alanine 197–lysine 207. At serine 238 the chain carries Phosphoserine. At arginine 240 the chain carries Omega-N-methylarginine. Residues serine 248 and serine 249 each carry the phosphoserine modification. An intramembrane region (helical) is located at residues isoleucine 269–alanine 289. Topologically, residues tyrosine 290 to serine 317 are cytoplasmic. Residues isoleucine 318–valine 338 traverse the membrane as a helical segment. Topologically, residues tyrosine 339 to lysine 340 are extracellular.

This sequence belongs to the CD225/Dispanin family. In terms of assembly, component of the outer core of AMPAR complex. AMPAR complex consists of an inner core made of 4 pore-forming GluA/GRIA proteins (GRIA1, GRIA2, GRIA3 and GRIA4) and 4 major auxiliary subunits arranged in a twofold symmetry. One of the two pairs of distinct binding sites is occupied either by CNIH2, CNIH3 or CACNG2, CACNG3. The other harbors CACNG2, CACNG3, CACNG4, CACNG8 or GSG1L. This inner core of AMPAR complex is complemented by outer core constituents binding directly to the GluA/GRIA proteins at sites distinct from the interaction sites of the inner core constituents. Outer core constituents include at least PRRT1, PRRT2, CKAMP44/SHISA9, FRRS1L and NRN1. The proteins of the inner and outer core serve as a platform for other, more peripherally associated AMPAR constituents. Alone or in combination, these auxiliary subunits control the gating and pharmacology of the AMPAR complex and profoundly impact their biogenesis and protein processing. Interacts with intersectin 1/ITSN1. Interacts with SNARE complex components, including SNAP25, STX1A, SYT1 and SYT2; this interaction may inhibit SNARE complex formation.

The protein localises to the cell membrane. It localises to the presynaptic cell membrane. The protein resides in the synapse. It is found in the cell projection. Its subcellular location is the axon. The protein localises to the cytoplasmic vesicle. It localises to the secretory vesicle. The protein resides in the synaptic vesicle membrane. It is found in the postsynaptic density membrane. Its subcellular location is the dendritic spine. As a component of the outer core of AMPAR complex, may be involved in synaptic transmission in the central nervous system. In hippocampal neurons, in presynaptic terminals, plays an important role in the final steps of neurotransmitter release, possibly by regulating Ca(2+)-sensing. In the cerebellum, may inhibit SNARE complex formation and down-regulate short-term facilitation. This chain is Proline-rich transmembrane protein 2 (PRRT2), found in Pongo abelii (Sumatran orangutan).